The sequence spans 124 residues: UPF0102 protein BL0935 (124 aa).

This sequence belongs to the UPF0102 family.

The chain is UPF0102 protein BL0935 from Bifidobacterium longum (strain NCC 2705).